The sequence spans 79 residues: Raniseptin-9 (79 aa).

Positions 1–22 (MAFLKKSLFLVLFLGIVSLSIC) are cleaved as a signal peptide. Positions 23-49 (EEEKREGEEEEKQEEENEELSEEELRE) are excised as a propeptide. Residues 27–46 (REGEEEEKQEEENEELSEEE) form a disordered region. A compositionally biased stretch (acidic residues) spans 30-44 (EEEEKQEEENEELSE).

Belongs to the frog skin active peptide (FSAP) family. Dermaseptin subfamily. As to expression, expressed by the skin glands.

It localises to the secreted. Its function is as follows. Has antibacterial activity. This chain is Raniseptin-9, found in Boana raniceps (Chaco tree frog).